The following is a 264-amino-acid chain: Thiazole synthase (264 aa).

The active-site Schiff-base intermediate with DXP is the K106. 1-deoxy-D-xylulose 5-phosphate-binding positions include G167, 193-194 (AG), and 215-216 (NS).

It belongs to the ThiG family. As to quaternary structure, homotetramer. Forms heterodimers with either ThiH or ThiS.

The protein localises to the cytoplasm. It catalyses the reaction [ThiS sulfur-carrier protein]-C-terminal-Gly-aminoethanethioate + 2-iminoacetate + 1-deoxy-D-xylulose 5-phosphate = [ThiS sulfur-carrier protein]-C-terminal Gly-Gly + 2-[(2R,5Z)-2-carboxy-4-methylthiazol-5(2H)-ylidene]ethyl phosphate + 2 H2O + H(+). It functions in the pathway cofactor biosynthesis; thiamine diphosphate biosynthesis. Catalyzes the rearrangement of 1-deoxy-D-xylulose 5-phosphate (DXP) to produce the thiazole phosphate moiety of thiamine. Sulfur is provided by the thiocarboxylate moiety of the carrier protein ThiS. In vitro, sulfur can be provided by H(2)S. The protein is Thiazole synthase of Pseudomonas fluorescens (strain Pf0-1).